Consider the following 307-residue polypeptide: Murein tetrapeptide carboxypeptidase (307 aa).

The Nucleophile role is filled by Ser-115. Active-site charge relay system residues include Glu-217 and His-285.

Belongs to the peptidase S66 family. Homodimer.

It localises to the cytoplasm. The enzyme catalyses N-acetyl-D-glucosaminyl-N-acetylmuramoyl-L-alanyl-meso-2,6-diaminoheptanedioyl-D-alanine + H2O = N-acetyl-D-glucosaminyl-N-acetylmuramoyl-L-alanyl-meso-2,6-diaminoheptanedioate + D-alanine. Its pathway is cell wall biogenesis; peptidoglycan recycling. In terms of biological role, releases the terminal D-alanine residue from the cytoplasmic disaccharide-tetrapeptide GlcNAc-MurNAc-L-Ala-gamma-D-Glu-meso-Dap-D-Ala, which is a murein turnover product. Probably also act on free tetrapetide. May be involved in murein recycling. The chain is Murein tetrapeptide carboxypeptidase from Pseudomonas aeruginosa (strain ATCC 15692 / DSM 22644 / CIP 104116 / JCM 14847 / LMG 12228 / 1C / PRS 101 / PAO1).